Reading from the N-terminus, the 272-residue chain is Elongation factor Ts (272 aa).

The interval 86–89 (TDFV) is involved in Mg(2+) ion dislocation from EF-Tu.

This sequence belongs to the EF-Ts family.

The protein localises to the cytoplasm. Functionally, associates with the EF-Tu.GDP complex and induces the exchange of GDP to GTP. It remains bound to the aminoacyl-tRNA.EF-Tu.GTP complex up to the GTP hydrolysis stage on the ribosome. This is Elongation factor Ts from Blochmanniella pennsylvanica (strain BPEN).